Reading from the N-terminus, the 101-residue chain is NAD(P)H-quinone oxidoreductase subunit 4L, chloroplastic (101 aa).

A run of 3 helical transmembrane segments spans residues Met2 to Ile22, Met32 to Phe52, and Ile61 to Val81.

This sequence belongs to the complex I subunit 4L family. NDH is composed of at least 16 different subunits, 5 of which are encoded in the nucleus.

It localises to the plastid. The protein resides in the chloroplast thylakoid membrane. It catalyses the reaction a plastoquinone + NADH + (n+1) H(+)(in) = a plastoquinol + NAD(+) + n H(+)(out). It carries out the reaction a plastoquinone + NADPH + (n+1) H(+)(in) = a plastoquinol + NADP(+) + n H(+)(out). NDH shuttles electrons from NAD(P)H:plastoquinone, via FMN and iron-sulfur (Fe-S) centers, to quinones in the photosynthetic chain and possibly in a chloroplast respiratory chain. The immediate electron acceptor for the enzyme in this species is believed to be plastoquinone. Couples the redox reaction to proton translocation, and thus conserves the redox energy in a proton gradient. This Gossypium barbadense (Sea Island cotton) protein is NAD(P)H-quinone oxidoreductase subunit 4L, chloroplastic.